The chain runs to 167 residues: Peptide deformylase (167 aa).

Fe cation-binding residues include cysteine 91 and histidine 133. Glutamate 134 is a catalytic residue. A Fe cation-binding site is contributed by histidine 137.

Belongs to the polypeptide deformylase family. Fe(2+) is required as a cofactor.

The catalysed reaction is N-terminal N-formyl-L-methionyl-[peptide] + H2O = N-terminal L-methionyl-[peptide] + formate. Removes the formyl group from the N-terminal Met of newly synthesized proteins. Requires at least a dipeptide for an efficient rate of reaction. N-terminal L-methionine is a prerequisite for activity but the enzyme has broad specificity at other positions. In Neisseria meningitidis serogroup C (strain 053442), this protein is Peptide deformylase.